Reading from the N-terminus, the 351-residue chain is L-threonine 3-dehydrogenase (351 aa).

Cys-39 is a Zn(2+) binding site. Catalysis depends on charge relay system residues Thr-41 and His-44. Positions 64, 65, 94, 97, 100, and 108 each coordinate Zn(2+). NAD(+) is bound by residues Ile-176, Asp-196, Arg-201, 271–273 (LGI), and 295–296 (IY).

It belongs to the zinc-containing alcohol dehydrogenase family. In terms of assembly, homotetramer. The cofactor is Zn(2+).

The protein localises to the cytoplasm. The enzyme catalyses L-threonine + NAD(+) = (2S)-2-amino-3-oxobutanoate + NADH + H(+). It participates in amino-acid degradation; L-threonine degradation via oxydo-reductase pathway; glycine from L-threonine: step 1/2. Catalyzes the NAD(+)-dependent oxidation of L-threonine to 2-amino-3-ketobutyrate. The polypeptide is L-threonine 3-dehydrogenase (Francisella philomiragia subsp. philomiragia (strain ATCC 25017 / CCUG 19701 / FSC 153 / O#319-036)).